Consider the following 1017-residue polypeptide: MLEALKPAEGATFTYIKGRLIKQQAAVENPILPFPIFFLIKQNKVFLIKSFQSSQKCEFCGDFFANSHTCSVRRRDFYFHHINFKSSEWWSQISFQPIGSCDDTKRFFLTYDVETYTWHGKHGKQLVPFMLVFHLSGELELVSLSANIAEQQRWLAWDTPHTYYYVSPIKGEIGKAFKDLRYEIQKQVTRLLWDNFVGENPELAEIQERHHVNHIDDITAEMHKIKTKGSPQFIEIYVIGHNICGFDEIVLAAQVIHNRTDVLPAFKINRNFMPRNGKILFNDISFCLPNPKYEKRKDFADWECGKLTAADHKYQFVKFMVRDTFALTHTSLRNAAGAYELPVEKGSCPYEAVNEFYRIGSYQQDEDGFPSLRYWKSSEEYQLNKALWREKNVGAYDIIQQTLHYCVQDVLVTSALVNKLQESYKNFIASQVNLPDASFNIFQRPTISSNSHAIFKQILYREVRPNKANLDNVLLAPSHEMYDYVRQSIRGGRCYPTYIGIMEQPIYVYDICGMYASALTHPFPSGQPLNPYERALAATEWIRKLENLEQKIDYFDECLLPGIFTIDADPPDELFLDELPPFCSRKGGRLCWANEPLRGEVATSIDLITLHNRGWAVRILPDERTTIFPEWKCVAKEYVQLNIGAKEKADKEKNQTMRSIAKLLSNALYGSFATKLDNKKIVFSDQLEASASKTIARGNFSIKSSSFIETDNFSAEIMPEFVVTYPPAPSAELDESDENEEHTLFIPKDSHVTYKYKPITFLETEDDDICLHTLENNSPLIENNRYASHIASFVLAWTRVFVSEWAEFLYAEDRGKPLHQRTIKSVYGDTDSLFVTEEGHRLMEQRGKHRIKKNGGKLVFDPKNPSITWLVECETQCEKCKSDAFSSESVFLAPKLYALKNTVCTCCGHVGKGKLRAKGHATTELCYDTLAKCYLSDAQQGSQRFHTSRLSLKRTLATNQSNAAPFTVTETTLTRTVRPWKDKTLVDIDGHRLMPYSKSNPNPRNNDVCWMTLPWNM.

Belongs to the DNA polymerase type-B family. Heterodimer with the terminal protein; this heterodimer binds to bp 9 to 18 of the genome. Forms a complex with viral pTP, DBP and hosts NFIA and POU2F1/OCT1 for initiation of replication.

The protein localises to the host nucleus. The enzyme catalyses DNA(n) + a 2'-deoxyribonucleoside 5'-triphosphate = DNA(n+1) + diphosphate. Functionally, eukaryotic-type DNA polymerase involved in viral genomic replication. DNA synthesis is protein primed, and acts in a strand displacement replication. Assembles in complex with viral pTP, DBP, host NFIA and host POU2F1/OCT1 on viral origin of replication. The polymerase covalently transfers dCMP onto pTP, thereby initiating complementary strand synthesis. This Bovine adenovirus 2 (BAdV-2) protein is DNA polymerase.